A 377-amino-acid chain; its full sequence is Homoserine O-succinyltransferase (377 aa).

An AB hydrolase-1 domain is found at 50–359 (NAVLVCHALS…SSHGHDSFLM (310 aa)). Catalysis depends on S156, which acts as the Nucleophile. R226 is a binding site for substrate. Active-site residues include D321 and H354. D355 is a substrate binding site.

This sequence belongs to the AB hydrolase superfamily. MetX family. In terms of assembly, homodimer.

The protein localises to the cytoplasm. The enzyme catalyses L-homoserine + succinyl-CoA = O-succinyl-L-homoserine + CoA. Its pathway is amino-acid biosynthesis; L-methionine biosynthesis via de novo pathway; O-succinyl-L-homoserine from L-homoserine: step 1/1. Its function is as follows. Transfers a succinyl group from succinyl-CoA to L-homoserine, forming succinyl-L-homoserine. This is Homoserine O-succinyltransferase from Nitrosospira multiformis (strain ATCC 25196 / NCIMB 11849 / C 71).